The following is a 687-amino-acid chain: Amine oxidase [copper-containing] gamma 2 (687 aa).

Positions 1 to 24 (MVELSFSQLLVLLLSLLFLFTTLA) are cleaved as a signal peptide. N-linked (GlcNAc...) asparagine glycosylation occurs at asparagine 154. Cysteine 169 and cysteine 191 form a disulfide bridge. Residue asparagine 244 is glycosylated (N-linked (GlcNAc...) asparagine). 333 to 344 (YMDAGEFGLGPS) is a binding site for substrate. Aspartate 335 (proton acceptor) is an active-site residue. An intrachain disulfide couples cysteine 354 to cysteine 380. Substrate is bound at residue 420–425 (VGNYDY). Tyrosine 423 (schiff-base intermediate with substrate; via topaquinone) is an active-site residue. Tyrosine 423 is subject to 2',4',5'-topaquinone. Cu cation is bound by residues histidine 480 and histidine 482. The Mn(2+) site is built by aspartate 489, methionine 490, and aspartate 491. Residues asparagine 497 and asparagine 598 are each glycosylated (N-linked (GlcNAc...) asparagine). Mn(2+)-binding residues include aspartate 632 and isoleucine 633. Histidine 643 is a binding site for Cu cation.

It belongs to the copper/topaquinone oxidase family. In terms of assembly, homodimer. The cofactor is Cu cation. It depends on Zn(2+) as a cofactor. Requires L-topaquinone as cofactor. Mn(2+) serves as cofactor. Topaquinone (TPQ) is generated by copper-dependent autoxidation of a specific tyrosyl residue. As to expression, expressed in roots, leaves and cotyledons.

Its subcellular location is the secreted. The protein resides in the extracellular space. It localises to the apoplast. It catalyses the reaction a primary methyl amine + O2 + H2O = an aldehyde + H2O2 + NH4(+). It functions in the pathway amine and polyamine degradation; putrescine degradation. In terms of biological role, copper amine oxidase that can use putrescine and spermidine as substrates. The polypeptide is Amine oxidase [copper-containing] gamma 2 (Arabidopsis thaliana (Mouse-ear cress)).